The chain runs to 284 residues: MSSAIINGKEIGQEIRNAVAERVIRLKEQGLTPGLAVVLVGDNQASATYVRNKQKSCEAIGMYSELIKLPEETKQEELLTQIQQLNQREDIHGILVQLPLPKHIDEDTVIATIAVEKDVDGFSPVSVGKMMLGQETFLPCTPFGVMKLLEYSGIEIAGKHAVIVGRSHIVGKPMGQLLLQKDATVTYTHSKTPDLPSFTKQADILIAAVGRANFITKEHVKEGAVVIDVGINRDDNNKLCGDVNFAEVDGIASHITPVPGGVGPMTITMLLFNTVQAAENKLAN.

Residues 165-167 (GRS), Ser190, and Ile231 each bind NADP(+).

Belongs to the tetrahydrofolate dehydrogenase/cyclohydrolase family. As to quaternary structure, homodimer.

The enzyme catalyses (6R)-5,10-methylene-5,6,7,8-tetrahydrofolate + NADP(+) = (6R)-5,10-methenyltetrahydrofolate + NADPH. It catalyses the reaction (6R)-5,10-methenyltetrahydrofolate + H2O = (6R)-10-formyltetrahydrofolate + H(+). It functions in the pathway one-carbon metabolism; tetrahydrofolate interconversion. In terms of biological role, catalyzes the oxidation of 5,10-methylenetetrahydrofolate to 5,10-methenyltetrahydrofolate and then the hydrolysis of 5,10-methenyltetrahydrofolate to 10-formyltetrahydrofolate. This chain is Bifunctional protein FolD, found in Lysinibacillus sphaericus (strain C3-41).